The chain runs to 474 residues: Capsid vertex component 1 (474 aa).

Belongs to the herpesviridae CVC1 protein family. Interacts (via C-terminus) with capsid vertex component 2/CVC2.

The protein localises to the virion. It is found in the host nucleus. Capsid vertex-specific component that plays a role during viral DNA encapsidation, assuring correct genome cleavage and presumably stabilizing capsids that contain full-length viral genomes. This chain is Capsid vertex component 1, found in Alcelaphine herpesvirus 1 (strain C500) (AlHV-1).